We begin with the raw amino-acid sequence, 413 residues long: uncharacterized protein (413 aa).

4 consecutive transmembrane segments (helical) span residues 22 to 42, 270 to 290, 312 to 332, and 379 to 399; these read VLLVSILSKIGISISIFTLIL, IIYVTLFLIIIISCFSVISIC, ILIQLIFFYYGMRFIIIGNLI, and LIIIFISTLTIGIVANWYPIY.

This sequence belongs to the ABC-4 integral membrane protein family. LolC/E subfamily.

Its subcellular location is the cell membrane. This is an uncharacterized protein from Buchnera aphidicola subsp. Schizaphis graminum (strain Sg).